The chain runs to 290 residues: Lipid phosphate phosphatase 2 (290 aa).

Transmembrane regions (helical) follow at residues 26–46, 69–89, and 93–113; these read WLIL…EPFH, WAVP…YYFI, and VYDL…TGVI. Asn-142 is a glycosylation site (N-linked (GlcNAc...) asparagine). A run of 3 helical transmembrane segments spans residues 162–182, 193–213, and 226–246; these read SFPS…SLYL, GHVA…LVGV, and VFGG…QFFP.

The protein belongs to the PA-phosphatase related phosphoesterase family. Expressed in roots, stems, leaves, buds, flowers and siliques.

The protein resides in the membrane. Its activity is regulated as follows. PA phosphatase activity not inhibited by N-ethylmaleimide. Its function is as follows. May play a general 'housekeeping role' in lipid metabolism. Exhibits both diacylglycerol pyrophosphate (DGPP) phosphatase and phosphatidate (PA) phosphatase activities with no preference for either substrate. May play a role downstream of the ABA signaling pathway during seed germination and in stomatal movement in leaves. The protein is Lipid phosphate phosphatase 2 (LPP2) of Arabidopsis thaliana (Mouse-ear cress).